The primary structure comprises 641 residues: Tetracycline resistance protein TetQ (641 aa).

The 244-residue stretch at Met-1–Ala-244 folds into the tr-type G domain. Residues Ala-10–Thr-17, Asp-74–His-78, and Asn-128–Asp-131 each bind GTP.

It belongs to the TRAFAC class translation factor GTPase superfamily. Classic translation factor GTPase family. TetM/TetO subfamily.

Abolishes the inhibitory effect of tetracyclin on protein synthesis by a non-covalent modification of the ribosomes. The chain is Tetracycline resistance protein TetQ (tetQ) from Xylanibacter ruminicola (Prevotella ruminicola).